A 583-amino-acid chain; its full sequence is 1-deoxy-D-xylulose-5-phosphate synthase (583 aa).

Thiamine diphosphate contacts are provided by residues His74 and 115–117; that span reads GHS. Mg(2+) is bound at residue Asp146. Thiamine diphosphate is bound by residues 147–148, Asn175, Phe244, and Glu327; that span reads GG. A Mg(2+)-binding site is contributed by Asn175.

It belongs to the transketolase family. DXPS subfamily. As to quaternary structure, homodimer. The cofactor is Mg(2+). Thiamine diphosphate is required as a cofactor.

It carries out the reaction D-glyceraldehyde 3-phosphate + pyruvate + H(+) = 1-deoxy-D-xylulose 5-phosphate + CO2. The protein operates within metabolic intermediate biosynthesis; 1-deoxy-D-xylulose 5-phosphate biosynthesis; 1-deoxy-D-xylulose 5-phosphate from D-glyceraldehyde 3-phosphate and pyruvate: step 1/1. Catalyzes the acyloin condensation reaction between C atoms 2 and 3 of pyruvate and glyceraldehyde 3-phosphate to yield 1-deoxy-D-xylulose-5-phosphate (DXP). This chain is 1-deoxy-D-xylulose-5-phosphate synthase, found in Myxococcus xanthus (strain DK1622).